Reading from the N-terminus, the 121-residue chain is Small ribosomal subunit protein uS13 (121 aa).

A disordered region spans residues 94–121 (GLPVRGQKTRNNAHTVKGKPKAIAGKKK). Positions 109-121 (VKGKPKAIAGKKK) are enriched in basic residues.

The protein belongs to the universal ribosomal protein uS13 family. As to quaternary structure, part of the 30S ribosomal subunit. Forms a loose heterodimer with protein S19. Forms two bridges to the 50S subunit in the 70S ribosome.

Functionally, located at the top of the head of the 30S subunit, it contacts several helices of the 16S rRNA. In the 70S ribosome it contacts the 23S rRNA (bridge B1a) and protein L5 of the 50S subunit (bridge B1b), connecting the 2 subunits; these bridges are implicated in subunit movement. Contacts the tRNAs in the A and P-sites. This is Small ribosomal subunit protein uS13 from Onion yellows phytoplasma (strain OY-M).